An 83-amino-acid chain; its full sequence is MRITIKRWGNSAGMVIPNIVMKELNLQPGQSVEAQVSNNQLILTPISRRYSLDELLAQCDMNAAELSEQDVWGKSTPAGDEIW.

In terms of domain architecture, SpoVT-AbrB spans 3 to 48 (ITIKRWGNSAGMVIPNIVMKELNLQPGQSVEAQVSNNQLILTPISR).

Belongs to the PemI family. Interacts with ChpB, inhibiting its endoribonuclease activity.

Functionally, antitoxin component of a type II toxin-antitoxin (TA) system. May be involved in the regulation of cell growth. It acts as a suppressor of the endoribonuclease (inhibitory function) of ChpB protein. Both ChpS and ChpB probably bind to the promoter region of the chpS-chpB operon to autoregulate their synthesis. This is Antitoxin ChpS (chpS) from Escherichia coli (strain K12).